Reading from the N-terminus, the 141-residue chain is U-scoloptoxin(17)-Er3a (141 aa).

Residues 1-21 (MKSTFALVFGILMVIAHLSFA) form the signal peptide.

This sequence belongs to the scoloptoxin-17 family. Post-translationally, contains 3 disulfide bonds. In terms of tissue distribution, expressed by the venom gland.

It is found in the secreted. In Ethmostigmus rubripes (Giant centipede), this protein is U-scoloptoxin(17)-Er3a.